We begin with the raw amino-acid sequence, 109 residues long: Large ribosomal subunit protein uL22 (109 aa).

Belongs to the universal ribosomal protein uL22 family. In terms of assembly, part of the 50S ribosomal subunit.

Functionally, this protein binds specifically to 23S rRNA; its binding is stimulated by other ribosomal proteins, e.g. L4, L17, and L20. It is important during the early stages of 50S assembly. It makes multiple contacts with different domains of the 23S rRNA in the assembled 50S subunit and ribosome. In terms of biological role, the globular domain of the protein is located near the polypeptide exit tunnel on the outside of the subunit, while an extended beta-hairpin is found that lines the wall of the exit tunnel in the center of the 70S ribosome. This Methylobacillus flagellatus (strain ATCC 51484 / DSM 6875 / VKM B-1610 / KT) protein is Large ribosomal subunit protein uL22.